Here is a 145-residue protein sequence, read N- to C-terminus: Protein BUD31 homolog 1 (145 aa).

This sequence belongs to the BUD31 (G10) family.

Its subcellular location is the nucleus. This Oryza sativa subsp. japonica (Rice) protein is Protein BUD31 homolog 1.